Here is a 340-residue protein sequence, read N- to C-terminus: Cytosolic Fe-S cluster assembly factor NBP35 (340 aa).

A disordered region spans residues 1–41 (MPSLVDPVANKTDEGNNRTDLKAPEPEHCPGTESEEAGKAD). A compositionally biased stretch (basic and acidic residues) spans 11–30 (KTDEGNNRTDLKAPEPEHCP). Residues cysteine 29, cysteine 43, cysteine 46, and cysteine 52 each coordinate [4Fe-4S] cluster. 82–89 (GKGGVGKS) contributes to the ATP binding site. 2 residues coordinate [4Fe-4S] cluster: cysteine 255 and cysteine 258.

Belongs to the Mrp/NBP35 ATP-binding proteins family. NUBP1/NBP35 subfamily. As to quaternary structure, heterotetramer of 2 NBP35 and 2 CFD1 chains. [4Fe-4S] cluster serves as cofactor.

It is found in the cytoplasm. The protein localises to the nucleus. In terms of biological role, component of the cytosolic iron-sulfur (Fe/S) protein assembly (CIA) machinery. Required for maturation of extramitochondrial Fe-S proteins. The NBP35-CFD1 heterotetramer forms a Fe-S scaffold complex, mediating the de novo assembly of an Fe-S cluster and its transfer to target apoproteins. Required for biogenesis and export of both ribosomal subunits, which may reflect a role in assembly of the Fe/S clusters in RLI1, a protein which performs rRNA processing and ribosome export. The polypeptide is Cytosolic Fe-S cluster assembly factor NBP35 (Yarrowia lipolytica (strain CLIB 122 / E 150) (Yeast)).